The following is a 233-amino-acid chain: Glycolipid transfer protein 3 (233 aa).

Residues Asp-79, Asn-83, Trp-126, and His-165 each contribute to the a ganglioside GM3 (d18:1(4E)) site.

This sequence belongs to the GLTP family.

Its function is as follows. May be involved in glycolipids transfer. The polypeptide is Glycolipid transfer protein 3 (Arabidopsis thaliana (Mouse-ear cress)).